A 1184-amino-acid polypeptide reads, in one-letter code: DNA-directed RNA polymerase subunit beta (1184 aa).

The interval 1160–1184 (DDDFTNQNDAFNIVQPENAATEKTE) is disordered.

The protein belongs to the RNA polymerase beta chain family. As to quaternary structure, the RNAP catalytic core consists of 2 alpha, 1 beta, 1 beta' and 1 omega subunit. When a sigma factor is associated with the core the holoenzyme is formed, which can initiate transcription.

It carries out the reaction RNA(n) + a ribonucleoside 5'-triphosphate = RNA(n+1) + diphosphate. Functionally, DNA-dependent RNA polymerase catalyzes the transcription of DNA into RNA using the four ribonucleoside triphosphates as substrates. This chain is DNA-directed RNA polymerase subunit beta, found in Listeria innocua serovar 6a (strain ATCC BAA-680 / CLIP 11262).